An 864-amino-acid polypeptide reads, in one-letter code: Leucine--tRNA ligase (864 aa).

Positions 40-51 match the 'HIGH' region motif; it reads PYPSGAGLHVGH. The 'KMSKS' region signature appears at 636 to 640; that stretch reads KMSKS. Lys639 serves as a coordination point for ATP.

The protein belongs to the class-I aminoacyl-tRNA synthetase family.

The protein resides in the cytoplasm. The enzyme catalyses tRNA(Leu) + L-leucine + ATP = L-leucyl-tRNA(Leu) + AMP + diphosphate. The protein is Leucine--tRNA ligase of Leptospira borgpetersenii serovar Hardjo-bovis (strain JB197).